We begin with the raw amino-acid sequence, 276 residues long: Anthranilate synthase beta subunit 1, chloroplastic (276 aa).

Residues 1–50 constitute a chloroplast transit peptide; sequence MAASTLYKSCLLQPKSGSTTRRLNPSLVNPLTNPTRVSVLGKSRRDVFAK. One can recognise a Glutamine amidotransferase type-1 domain in the interval 74–273; sequence PIIVIDNYDS…IKIVEKKESE (200 aa). Cys152 acts as the Nucleophile in catalysis. Residues His247 and Glu249 contribute to the active site.

As to quaternary structure, heterotetramer consisting of two non-identical subunits: a beta subunit and a large alpha subunit. Expressed in the central cylinder of mature primary root zones, including pericycle and early lateral root primordia, and vasculature of cotyledons.

The protein resides in the plastid. It is found in the chloroplast. It catalyses the reaction chorismate + L-glutamine = anthranilate + pyruvate + L-glutamate + H(+). The protein operates within amino-acid biosynthesis; L-tryptophan biosynthesis; L-tryptophan from chorismate: step 1/5. Functionally, part of a heterotetrameric complex that catalyzes the two-step biosynthesis of anthranilate, an intermediate in the biosynthesis of L-tryptophan. In the first step, the glutamine-binding beta subunit of anthranilate synthase (AS) provides the glutamine amidotransferase activity which generates ammonia as a substrate that, along with chorismate, is used in the second step, catalyzed by the large alpha subunit of AS to produce anthranilate. Plays an important regulatory role in auxin production via the tryptophan-dependent biosynthetic pathway. In Arabidopsis thaliana (Mouse-ear cress), this protein is Anthranilate synthase beta subunit 1, chloroplastic (ASB1).